The primary structure comprises 171 residues: UPF0398 protein Sez_1569 (171 aa).

The protein belongs to the UPF0398 family.

This is UPF0398 protein Sez_1569 from Streptococcus equi subsp. zooepidemicus (strain MGCS10565).